Consider the following 207-residue polypeptide: Ribosomal RNA small subunit methyltransferase G (207 aa).

S-adenosyl-L-methionine is bound by residues G75, M80, 126-127 (VE), and R141.

It belongs to the methyltransferase superfamily. RNA methyltransferase RsmG family.

It localises to the cytoplasm. The catalysed reaction is guanosine(527) in 16S rRNA + S-adenosyl-L-methionine = N(7)-methylguanosine(527) in 16S rRNA + S-adenosyl-L-homocysteine. In terms of biological role, specifically methylates the N7 position of guanine in position 527 of 16S rRNA. This is Ribosomal RNA small subunit methyltransferase G from Laribacter hongkongensis (strain HLHK9).